A 329-amino-acid polypeptide reads, in one-letter code: MYSTKCTNFFLEIIFYVIFCTLFLLVLEKMSKLLSWIVIVCLFVFAISSKCSAQNYGINVPITGSMDVVLANSTQDQIGLTSTLCIYYPKAADTEIADPEWKATVTQLLLTKGWPTTSVYLNEYQDLVTFSNDPKLYCDYNIVLAHYTNDVALDISELAEFLLYEWLCNPMDVTLYYYQQTSEPNKWIAMGTNCTIKVCPLNTQTLGIGCQTTNTDTFEILTMSEKLAIIDVVDGVNHKVDYTVATCKINNCIRLNPRENVAIIQVGGPEVLDISENPMVIPKVSRMTRMNWKKWWQVFYTIVDYINTIITTMSKRSRSLDVSSYYYRV.

A signal peptide spans 1 to 53; the sequence is MYSTKCTNFFLEIIFYVIFCTLFLLVLEKMSKLLSWIVIVCLFVFAISSKCSA. A glycan (N-linked (GlcNAc...) asparagine; by host) is linked at Asn72. Intrachain disulfides connect Cys85-Cys138, Cys168-Cys252, Cys194-Cys247, and Cys199-Cys210. Asp98 contributes to the Ca(2+) binding site. The tract at residues 168-170 is CNP motif; interaction with ITGAV/ITGB3; the sequence is CNP. Residue Gln180 participates in Ca(2+) binding. The N-linked (GlcNAc...) asparagine; by host glycan is linked to Asn193. 7 residues coordinate Ca(2+): Gly209, Thr217, Glu219, Asp231, Val232, Asp234, and Asp304.

Belongs to the rotavirus VP7 family. As to quaternary structure, homotrimer; disulfide-linked. 2 Ca(2+) ions bound at each subunit interface in the trimer hold the trimer together. Interacts with the intermediate capsid protein VP6. Interacts with the outer capsid protein VP5*. Post-translationally, N-glycosylated. In terms of processing, the N-terminus is blocked possibly by pyroglutamic acid.

Its subcellular location is the virion. The protein localises to the host endoplasmic reticulum lumen. In terms of biological role, calcium-binding protein that interacts with rotavirus cell receptors once the initial attachment by VP4 has been achieved. Rotavirus attachment and entry into the host cell probably involves multiple sequential contacts between the outer capsid proteins VP4 and VP7, and the cell receptors. Following entry into the host cell, low intracellular or intravesicular Ca(2+) concentration probably causes the calcium-stabilized VP7 trimers to dissociate from the virion. This step is probably necessary for the membrane-disrupting entry step and the release of VP4, which is locked onto the virion by VP7. The sequence is that of Outer capsid glycoprotein VP7 from Rotavirus A (strain RVA/Chicken/Ireland/Ch2/1979/G7P[X]) (RV-A).